Consider the following 871-residue polypeptide: MLGRRLAGAKPQSGALFKRFVVIPASSKARRRRRDVGGIRKNVSVEELELDKALDLRDPKELEFKLRQLREFTKNLATQIRVADDLVKKEAAQKELGNKSKEEDTADAASVILGTHNHHDRYQRRSLLQGEDLSSIILSVSHQVKKLLPEAILKRINDDELVLRSLINHRNSDWNAIISKLDQSPEKLDGVSQRALKNYILSKAKNLSLGSIRKADAMLLSNINHDLTKFNTSMYEFLFYNLSNLKPSQDPSSKYNNEVYTVMESLLDRYDEAQKVIAGKNVAIEAQEGIMPKVEMNQFILNCCIKFASKLLDVSKMNRFLTKFNRDYHILPNKENYTVIAQFYTKLGLHDKAWDIFATMKFLSADHKPDAKTYTCMLSLCNKEKNYAKAIDLFNEMIDLKVDPTPETLNALVKTLATVSGDPVASEGKAESLRLLAWKYLHQNEDLVNLRSGNFEDTILAMMSLCAYDGDAGLARALYFKYITTRFKSNFESWRMRQGDHSSVDYKKVWASTLNPFLFNYLMLAYANYSPGKLPLLLGFEQGAVTRRNLINNVDYLYKFQNDEAGPRAKLPMLPLADISEPSQILLESRAVWQFNLEFGGLCDLRISPLGSSKVLKDLAASAESIEDFSFQVLHQIALWKTQIVNHNALNPKSIMTYLTIPLKLGEKKEFLLRMSEFSYEQQTFEQHISSLYMNTKQQLLTARPGSSTHLTHSEIKKQPSSQTSFNEESSLAFLSSMKHKIIRNSSIYELTMKAAIRFQDQALATKAWESRGSYRKTLAFQNLPVAERTKKDAAFASLMVDFFTQQQMYTDAMGIIMASQRHISWRYPMVKRLHRKLVELEDTRSIKILMEIVNKRSKSDSSAEAVTSLG.

The transit peptide at 1-72 (MLGRRLAGAK…EFKLRQLREF (72 aa)) directs the protein to the mitochondrion. 2 PPR repeats span residues 333–369 (NKEN…DHKP) and 370–404 (DAKT…KVDP). The tract at residues 704 to 724 (RPGSSTHLTHSEIKKQPSSQT) is disordered.

It belongs to the CCM1 family. Binds to mitochondrial small subunit 15S rRNA.

The protein localises to the mitochondrion. Regulates mitochondrial small subunit maturation by controlling 15S rRNA 5'-end processing. Localizes to the 5' precursor of the 15S rRNA in a position that is subsequently occupied by mS47 in the mature yeast mtSSU. Uses structure and sequence-specific RNA recognition, binding to a single-stranded region of the precursor and specifically recognizing bases -6 to -1. The exchange of Ccm1 for mS47 is coupled to the irreversible removal of precursor rRNA that is accompanied by conformational changes of the mitoribosomal proteins uS5m and mS26. These conformational changes signal completion of 5'-end rRNA processing through protection of the mature 5'-end of the 15S rRNA and stabilization of mS47. The removal of the 5' precursor together with the dissociation of Ccm1 may be catalyzed by the 5'-3' exoribonuclease Pet127. Involved in the specific removal of group I introns in mitochondrial encoded transcripts. In Lachancea thermotolerans (strain ATCC 56472 / CBS 6340 / NRRL Y-8284) (Yeast), this protein is Mitochondrial 15S rRNA processing factor CCM1 (CCM1).